A 264-amino-acid polypeptide reads, in one-letter code: tRNA pseudouridine synthase A (264 aa).

Aspartate 56 acts as the Nucleophile in catalysis. Tyrosine 114 provides a ligand contact to substrate.

It belongs to the tRNA pseudouridine synthase TruA family. As to quaternary structure, homodimer.

It carries out the reaction uridine(38/39/40) in tRNA = pseudouridine(38/39/40) in tRNA. In terms of biological role, formation of pseudouridine at positions 38, 39 and 40 in the anticodon stem and loop of transfer RNAs. The polypeptide is tRNA pseudouridine synthase A (Buchnera aphidicola subsp. Baizongia pistaciae (strain Bp)).